The following is a 162-amino-acid chain: uncharacterized protein (162 aa).

4 consecutive transmembrane segments (helical) span residues 10–30 (ILSF…MLIL), 50–70 (IVEL…ALYN), 96–116 (IAQY…IILL), and 125–145 (FTAI…LFIF).

The protein localises to the cell membrane. This is an uncharacterized protein from Methanocaldococcus jannaschii (strain ATCC 43067 / DSM 2661 / JAL-1 / JCM 10045 / NBRC 100440) (Methanococcus jannaschii).